Reading from the N-terminus, the 366-residue chain is Carbamoyl phosphate synthase small chain (366 aa).

A CPSase region spans residues 1 to 172 (MYGILVLEDG…TYNAENEKTS (172 aa)). The L-glutamine site is built by Ser-45, Gly-220, and Gly-222. The Glutamine amidotransferase type-1 domain occupies 172-363 (SCVLIDCGVK…VELGIKFKAE (192 aa)). Cys-247 functions as the Nucleophile in the catalytic mechanism. The L-glutamine site is built by Leu-248, Gln-251, Asn-289, Gly-291, and Phe-292. Residues His-336 and Glu-338 contribute to the active site.

It belongs to the CarA family. In terms of assembly, composed of two chains; the small (or glutamine) chain promotes the hydrolysis of glutamine to ammonia, which is used by the large (or ammonia) chain to synthesize carbamoyl phosphate. Tetramer of heterodimers (alpha,beta)4.

It carries out the reaction hydrogencarbonate + L-glutamine + 2 ATP + H2O = carbamoyl phosphate + L-glutamate + 2 ADP + phosphate + 2 H(+). It catalyses the reaction L-glutamine + H2O = L-glutamate + NH4(+). Its pathway is amino-acid biosynthesis; L-arginine biosynthesis; carbamoyl phosphate from bicarbonate: step 1/1. The protein operates within pyrimidine metabolism; UMP biosynthesis via de novo pathway; (S)-dihydroorotate from bicarbonate: step 1/3. In terms of biological role, small subunit of the glutamine-dependent carbamoyl phosphate synthetase (CPSase). CPSase catalyzes the formation of carbamoyl phosphate from the ammonia moiety of glutamine, carbonate, and phosphate donated by ATP, constituting the first step of 2 biosynthetic pathways, one leading to arginine and/or urea and the other to pyrimidine nucleotides. The small subunit (glutamine amidotransferase) binds and cleaves glutamine to supply the large subunit with the substrate ammonia. The protein is Carbamoyl phosphate synthase small chain of Methanococcus maripaludis (strain C7 / ATCC BAA-1331).